A 232-amino-acid chain; its full sequence is uncharacterized protein (232 aa).

Residues 1–232 enclose the Autotransporter domain; sequence MIIKKSGGRW…LYTMGVSARF (232 aa).

This is an uncharacterized protein from Escherichia coli (strain K12).